The following is a 374-amino-acid chain: U-box domain-containing protein 8 (374 aa).

In terms of domain architecture, U-box spans 4–79 (DLPNDFRCPI…LNFAHVSLKE (76 aa)). ARM repeat units follow at residues 126–165 (SSIR…NLSL), 167–206 (DDNK…SLAV), 208–248 (EVNK…ALCS), 250–288 (PDNR…KCRG), and 289–327 (GREE…CLCC).

In terms of tissue distribution, expressed in the whole plant.

It catalyses the reaction S-ubiquitinyl-[E2 ubiquitin-conjugating enzyme]-L-cysteine + [acceptor protein]-L-lysine = [E2 ubiquitin-conjugating enzyme]-L-cysteine + N(6)-ubiquitinyl-[acceptor protein]-L-lysine.. The protein operates within protein modification; protein ubiquitination. Functions as an E3 ubiquitin ligase. Involved in the age-dependent pseudo-self-compatibility process. The polypeptide is U-box domain-containing protein 8 (PUB8) (Arabidopsis thaliana (Mouse-ear cress)).